Consider the following 433-residue polypeptide: VLTSMANQMELAKVKADRPATKQEEAAAKALKKNLIELIAARTQQQDGLPAKEAHRFAAVAFRDAQVKQLNNQPWQTIKNTLTHNGHHYTNTQLPAAEMKIGAKDIFPSAYEGKGVCSWDTKNIHHANNLWMSTVSVHEDGKDKTLFCGIRHGVLSPYHEKDPLLRQVGAENKAKEVLTAALFSKPELLNKALAGEAVSLKLVSVGLLTASNIFGKEGTMVEDQMRAWQSLTQPGKMIHLKIRNKDGDLQTVKIKPDVAAFNVGVNELALKLGFGLKASDSYNAEALHQLLGNDLRPEARPGGWVGEWLAQYPDNYEVVNTLARQIKDIWKNNQHHKDGGEPYKLAQRLAMLAHEIDAVPAWNCKSGKDRTGMMDSEIKREHISLHQTHMLSAPGSLPDSGGQKIFQKVLLNSGNLEIQKQNTGGAGNKVMKN.

Cys-364 is a catalytic residue. The CX5R motif motif lies at 364–370; the sequence is CKSGKDR.

It belongs to the phosphatase IpgD/SopB family.

The protein resides in the secreted. Converts phosphatidylinositol 3,4,5-trisphosphate (PtdIns 3,4,5-P3) to PtdIns 3-P and prevents the transition of PtdIns 3-P to PtdIns 3,5-P2. It is one of the known effectors injected by Salmonella into the host cell and is required for invasion and for an efficient generation and maintenance of Salmonella-containing vacuole (SVC). Alteration of the phosphoinositide composition of the plasma membrane causes membrane ruffling and actin cytoskeleton rearrangements. The persistence of PtdIns 3-P diverts the SCV from the endocytic pathway resulting in enlarged vesicles, which are essential to create a favorable environment where Salmonella can replicate and avoid immune defenses of the host cell. The sequence is that of Inositol phosphate phosphatase SopB (sopB) from Salmonella blockley.